Consider the following 327-residue polypeptide: Putative hydroxymethylpyrimidine/phosphomethylpyrimidine kinase C18B5.05c (327 aa).

Position 54 (Q54) interacts with 4-amino-5-hydroxymethyl-2-methylpyrimidine.

It belongs to the ThiD family.

It is found in the cytoplasm. It localises to the nucleus. The enzyme catalyses 4-amino-5-hydroxymethyl-2-methylpyrimidine + ATP = 4-amino-2-methyl-5-(phosphooxymethyl)pyrimidine + ADP + H(+). It catalyses the reaction 4-amino-2-methyl-5-(phosphooxymethyl)pyrimidine + ATP = 4-amino-2-methyl-5-(diphosphooxymethyl)pyrimidine + ADP. Its pathway is cofactor biosynthesis; thiamine diphosphate biosynthesis; 4-amino-2-methyl-5-diphosphomethylpyrimidine from 5-amino-1-(5-phospho-D-ribosyl)imidazole: step 2/3. It participates in cofactor biosynthesis; thiamine diphosphate biosynthesis; 4-amino-2-methyl-5-diphosphomethylpyrimidine from 5-amino-1-(5-phospho-D-ribosyl)imidazole: step 3/3. Its function is as follows. Catalyzes the phosphorylation of hydroxymethylpyrimidine phosphate (HMP-P) to HMP-PP, and of HMP to HMP-P. The chain is Putative hydroxymethylpyrimidine/phosphomethylpyrimidine kinase C18B5.05c from Schizosaccharomyces pombe (strain 972 / ATCC 24843) (Fission yeast).